We begin with the raw amino-acid sequence, 75 residues long: Penaeidin-3n (75 aa).

Residues 1–19 (MRLVVCLVFLASFALVCQG) form the signal peptide. A Pyrrolidone carboxylic acid modification is found at Gln-20. 2 cysteine pairs are disulfide-bonded: Cys-44-Cys-59 and Cys-48-Cys-66. The residue at position 74 (Ser-74) is a Serine amide.

It belongs to the penaeidin family.

The protein resides in the cytoplasmic granule. Antibacterial and antifungal activity. Presents chitin-binding activity. The chain is Penaeidin-3n from Penaeus setiferus (Atlantic white shrimp).